The sequence spans 484 residues: Keratin, type I cytoskeletal 14 (484 aa).

Residues 1-20 (MATCSRQFTSSSSMKGSCGI) are disordered. The segment at 1–120 (MATCSRQFTS…GIGDGLLVGS (120 aa)) is head. The segment at 121 to 156 (EKVTMQNLNDRLATYLDKVRALEEANTELEVKIRDW) is coil 1A. In terms of domain architecture, IF rod spans 121-432 (EKVTMQNLND…RLLEGEDAHL (312 aa)). Positions 157 to 174 (YQRQRPTEIKDYSPYFKT) are linker 1. The tract at residues 175–266 (IEDLKSKILA…KNHEEEMASM (92 aa)) is coil 1B. The interval 267 to 289 (RGQVGGDVNVEMDAAPGVDLSRI) is linker 12. Positions 290–428 (LNEMRDQYEK…ATYRRLLEGE (139 aa)) are coil 2. Residues 429-484 (DAHLSSSQFSSSSQFSSGSQSSRDVTSTNRQIRTKVMDVHDGKVVSTHEQVLRTKN) form a tail region. The interaction with Type I keratins and keratin filaments stretch occupies residues 431–484 (HLSSSQFSSSSQFSSGSQSSRDVTSTNRQIRTKVMDVHDGKVVSTHEQVLRTKN). Residues 435 to 450 (SQFSSSSQFSSGSQSS) are compositionally biased toward low complexity. Positions 435–457 (SQFSSSSQFSSGSQSSRDVTSTN) are disordered. Phosphoserine is present on Ser-447.

The protein belongs to the intermediate filament family. As to quaternary structure, heterotetramer of two type I and two type II keratins. Forms a disulfide-linked heterodimer (via 2B domains) with KRT5 (via 2B domains). Forms a heterodimer with KRT1; the interaction is more abundant in the absence of KRT5. Interacts with PLEC isoform 1C, when in a heterodimer with KRT5. Interacts with TRADD and with keratin filaments. Associates with other type I keratins. Interacts with EPPK1. Interacts with KLHL24. Interacts with PKP1 (via N-terminus) and PKP2. A disulfide bond is formed between rather than within filaments and promotes the formation of a keratin filament cage around the nucleus. In terms of processing, ubiquitinated by the BCR(KLHL24) E3 ubiquitin ligase complex. In terms of tissue distribution, expressed in the corneal epithelium (at protein level). Expressed in the basal layer of the epidermis and the outer root sheath of hair follicles (at protein level). Expressed in the epithelial basal layer in the tail epidermis. Expressed in the parabasal cell row, basal cell layer, and suprabasal epithelial layer of the tongue.

It is found in the cytoplasm. The protein localises to the nucleus. Its function is as follows. The nonhelical tail domain is involved in promoting KRT5-KRT14 filaments to self-organize into large bundles and enhances the mechanical properties involved in resilience of keratin intermediate filaments in vitro. The chain is Keratin, type I cytoskeletal 14 (Krt14) from Mus musculus (Mouse).